We begin with the raw amino-acid sequence, 444 residues long: Maturase K (444 aa).

The protein belongs to the intron maturase 2 family. MatK subfamily.

It is found in the plastid. The protein localises to the chloroplast. Its function is as follows. Usually encoded in the trnK tRNA gene intron. Probably assists in splicing its own and other chloroplast group II introns. The sequence is that of Maturase K from Chamaecyparis lawsoniana (Lawson false cypress).